The primary structure comprises 1469 residues: snRNA-activating protein complex subunit 4 (1469 aa).

The disordered stretch occupies residues 16–82 (ELERILDPGS…DPKDKTLPED (67 aa)). Positions 24–36 (GSSGSHVEISESS) are enriched in low complexity. The span at 37 to 53 (LESDSEADSLPSEDLDP) shows a compositional bias: acidic residues. Position 68 is a phosphoserine (serine 68). The segment at 84–133 (ETCLQLNMVYQEVIQEKLAEANLLLAQNREQQEELMRDLAGSKGTKVKDG) is SNAPC5-binding. In terms of domain architecture, Myb-like 1 spans 250–288 (EEALLGNRLDSHDWEKISNINFEGSRSAEEIRKFWQNSE). One can recognise an HTH myb-type 1 domain in the interval 289–343 (HPSINKQEWSREEEERLQAIAAAHGHLEWQKIAEELGTSRSAFQCLQKFQQHNKA). A DNA-binding region (H-T-H motif) is located at residues 317–341 (WQKIAEELGTSRSAFQCLQKFQQHN). A Myb-like 2 domain is found at 344-395 (LKRKEWTEEEDRMLTQLVQEMRVGSHIPYRRIVYYMEGRDSMQLIYRWTKSL). 2 consecutive HTH myb-type domains span residues 396–451 (DPGL…HFSL) and 452–503 (KKGR…GKKQ). 2 DNA-binding regions (H-T-H motif) span residues 424–447 (WFKI…LRRL) and 476–499 (WAKI…KIMM). Disordered stretches follow at residues 501–558 (KKQG…GDRA), 577–661 (QSTS…QALE), 685–710 (RSCT…SGDS), 834–894 (ASSS…KTVS), 932–981 (PLPH…DKRL), 1001–1051 (PAAS…PSPT), 1121–1167 (AAQG…PAEA), and 1184–1266 (IPEP…GPEK). A compositionally biased stretch (basic residues) spans 503–516 (QGLRRRRRRARHSV). The segment covering 519–541 (SSTSSSGSSSGSSGGSSSSSSSS) has biased composition (low complexity). Serine 599 carries the post-translational modification Phosphoserine. The span at 602-618 (KGSSASQGGSKEASTTA) shows a compositional bias: polar residues. Serine 626 bears the Phosphoserine mark. Positions 932 to 944 (PLPHTPHGRPAPG) are enriched in pro residues. Residues 951–968 (PLSGPGAPAAAKPGTSGS) show a composition bias toward low complexity. The segment covering 1014-1029 (ISVSCPESGLGQSQAP) has biased composition (polar residues). Over residues 1039–1051 (EAPPFLPAAPSPT) the composition is skewed to pro residues. Phosphothreonine is present on threonine 1157. Residues 1184–1195 (IPEPRTSSHADP) are compositionally biased toward basic and acidic residues. At serine 1224 the chain carries Phosphoserine. Residues 1281–1393 (ATQQWLGGQR…QGVRTTLSVP (113 aa)) form an SNAPC2-binding region. 3 positions are modified to phosphoserine: serine 1398, serine 1400, and serine 1440. The interval 1430 to 1449 (APDSGKCSASSCLDTSNDPD) is disordered. Residues 1436-1445 (CSASSCLDTS) are compositionally biased toward polar residues.

As to quaternary structure, part of the SNAPc complex composed of 5 subunits: SNAPC1, SNAPC2, SNAPC3, SNAPC4 and SNAPC5. SNAPC4 interacts with SNAPC1, SNAPC2, SNAPC5, BRF2 and TBP.

Its subcellular location is the nucleus. Part of the SNAPc complex required for the transcription of both RNA polymerase II and III small-nuclear RNA genes. Binds to the proximal sequence element (PSE), a non-TATA-box basal promoter element common to these 2 types of genes. Recruits TBP and BRF2 to the U6 snRNA TATA box. In Homo sapiens (Human), this protein is snRNA-activating protein complex subunit 4.